The following is a 418-amino-acid chain: MQHRQVALLLSIIPGLGQFYNKQWIKGIVFLFLGASFFAVFGDLLNMGFWGIFTLGTEVPRDNSVFLLAEGIIAVIVTCFGLAVYYVNLRDAFQSGKQRDENKPLSSLKEQYQHIISEGYPYVVSGPSLFILIFAVIFPILFSFALAFTNYDLYHSPPAKLIDWVGFQTFANIFTVDIWRSTFFDVLAWTVVWTLAASTLQVTLGIFLAIIVNQKDLRFKRFFRTILILPWAVPGFVTILIFAGLFNDSFGAMNHDILAFFGIDPLPWMTDANWSRLALILMQGWLGFPYIFLVSTGVLQSIPDDLYEAATIDGASVFSKLRYITLPMVFIAMAPIIITQFTFNFNNFNIIYLFNGGGPAVTGSTAGGTDILVSWIYKLTMQSSQYSLAAALTILLSVFVISIALWQFRQTKSFKEEA.

The next 9 membrane-spanning stretches (helical) occupy residues 25–45, 65–85, 129–149, 191–211, 226–246, 279–299, 323–343, 357–379, and 388–408; these read IKGI…GDLL, VFLL…LAVY, LFIL…LAFT, VVWT…LAII, ILIL…AGLF, LILM…TGVL, YITL…QFTF, GGPA…IYKL, and LAAA…LWQF. One can recognise an ABC transmembrane type-1 domain in the interval 187-407; that stretch reads LAWTVVWTLA…VFVISIALWQ (221 aa).

The protein belongs to the binding-protein-dependent transport system permease family. As to quaternary structure, the complex is composed of two ATP-binding proteins (MsmX), two transmembrane proteins (GanP and GanQ) and a solute-binding protein (GanS).

It is found in the cell membrane. Functionally, involved in galactan degradation. Part of the ABC transporter complex GanPQS involved in the uptake of galactooligosaccharides. Responsible for the translocation of the substrate across the membrane. In Bacillus subtilis (strain 168), this protein is Galactooligosaccharides transport system permease protein GanP (ganP).